Here is a 272-residue protein sequence, read N- to C-terminus: Universal stress protein MT2699 (272 aa).

Residues Gly15, 109–115, and 123–124 contribute to the ATP site; these read GSVGIGR and ST.

The protein belongs to the universal stress protein A family.

The chain is Universal stress protein MT2699 from Mycobacterium tuberculosis (strain CDC 1551 / Oshkosh).